The sequence spans 721 residues: 1,4-alpha-glucan branching enzyme GlgB (721 aa).

Residue aspartate 404 is the Nucleophile of the active site. Residue glutamate 457 is the Proton donor of the active site.

Belongs to the glycosyl hydrolase 13 family. GlgB subfamily. In terms of assembly, monomer.

The enzyme catalyses Transfers a segment of a (1-&gt;4)-alpha-D-glucan chain to a primary hydroxy group in a similar glucan chain.. Its pathway is glycan biosynthesis; glycogen biosynthesis. Its function is as follows. Catalyzes the formation of the alpha-1,6-glucosidic linkages in glycogen by scission of a 1,4-alpha-linked oligosaccharide from growing alpha-1,4-glucan chains and the subsequent attachment of the oligosaccharide to the alpha-1,6 position. The chain is 1,4-alpha-glucan branching enzyme GlgB from Novosphingobium aromaticivorans (strain ATCC 700278 / DSM 12444 / CCUG 56034 / CIP 105152 / NBRC 16084 / F199).